Reading from the N-terminus, the 503-residue chain is Cobyric acid synthase (503 aa).

One can recognise a GATase cobBQ-type domain in the interval 260–453; the sequence is KIGVAAIYFP…FHALFDESSV (194 aa). C341 functions as the Nucleophile in the catalytic mechanism. H445 is a catalytic residue.

It belongs to the CobB/CobQ family. CobQ subfamily.

Its pathway is cofactor biosynthesis; adenosylcobalamin biosynthesis. Catalyzes amidations at positions B, D, E, and G on adenosylcobyrinic A,C-diamide. NH(2) groups are provided by glutamine, and one molecule of ATP is hydrogenolyzed for each amidation. In Pelodictyon phaeoclathratiforme (strain DSM 5477 / BU-1), this protein is Cobyric acid synthase.